Reading from the N-terminus, the 663-residue chain is Tripartite terminase subunit 3 (663 aa).

A Walker A motif motif is present at residues 205 to 212 (VPRRHGKT). The Walker B motif motif lies at 297–302 (LLIVDE). Catalysis depends on E302, which acts as the For ATPase activity. Active-site for nuclease activity residues include D455, E526, and D640.

Belongs to the herpesviridae TRM3 protein family. Interacts with the terminase subunits TRM1 and TRM2. Interacts with portal protein.

It is found in the host nucleus. Component of the molecular motor that translocates viral genomic DNA in empty capsid during DNA packaging. Forms a tripartite terminase complex together with TRM1 and TRM2 in the host cytoplasm. Once the complex reaches the host nucleus, it interacts with the capsid portal vertex. This portal forms a ring in which genomic DNA is translocated into the capsid. TRM3 carries an RNase H-like nuclease activity that plays an important role for the cleavage of concatemeric viral DNA into unit length genomes. This is Tripartite terminase subunit 3 from Human herpesvirus 7 (strain JI) (HHV-7).